The sequence spans 326 residues: tRNA(Ile)-lysidine synthase (326 aa).

25–30 is a binding site for ATP; sequence SGGQDS.

It belongs to the tRNA(Ile)-lysidine synthase family.

Its subcellular location is the cytoplasm. The enzyme catalyses cytidine(34) in tRNA(Ile2) + L-lysine + ATP = lysidine(34) in tRNA(Ile2) + AMP + diphosphate + H(+). Ligates lysine onto the cytidine present at position 34 of the AUA codon-specific tRNA(Ile) that contains the anticodon CAU, in an ATP-dependent manner. Cytidine is converted to lysidine, thus changing the amino acid specificity of the tRNA from methionine to isoleucine. The protein is tRNA(Ile)-lysidine synthase of Prochlorococcus marinus (strain NATL1A).